A 391-amino-acid chain; its full sequence is Inner membrane protein YdcO (391 aa).

Topologically, residues 1-9 (MRLFSIPPP) are cytoplasmic. A helical transmembrane segment spans residues 10–30 (TLLAGFLAVLIGYASSAAIIW). The Periplasmic segment spans residues 31 to 42 (QAAIVAGATTAQ). The helical transmembrane segment at 43 to 63 (ISGWMTALGLAMGVSTLTLTL) threads the bilayer. Over 64–93 (WYRVPVLTAWSTPGAALLVTGLQGLTLNEA) the chain is Cytoplasmic. A helical transmembrane segment spans residues 94–114 (IGVFIVTNALIVLCGITGLFA). Topologically, residues 115–123 (RLMRIIPHS) are periplasmic. A helical transmembrane segment spans residues 124–144 (LAAAMLAGILLRFGLQAFASL). The Cytoplasmic segment spans residues 145 to 167 (DGQFTLCGSMLLVWLATKAVAPR). Residues 168–188 (YAVIAAMIIGIVIVIAQGDVV) form a helical membrane-spanning segment. At 189 to 200 (TTDVVFKPVLPT) the chain is on the periplasmic side. Residues 201-221 (YITPDFSFAHSLSVALPLFLV) form a helical membrane-spanning segment. The Cytoplasmic segment spans residues 222–246 (TMASQNAPGIAAMKAAGYSAPVSPL). A helical membrane pass occupies residues 247–267 (IVFTGLLALVFSPFGVYSVGI). Residues 268–287 (AAITAAICQSPEAHPDKDQR) are Periplasmic-facing. A helical membrane pass occupies residues 288–308 (WLAAAVAGIFYLLAGLFGSAI). Topologically, residues 309 to 311 (TGM) are cytoplasmic. Residues 312–332 (MAALPVSWIQMLAGLALLSTI) traverse the membrane as a helical segment. Residues 333 to 361 (GGSLYQALHNERERDAAVVAFLVTASGLT) lie on the Periplasmic side of the membrane. The helical transmembrane segment at 362–382 (LVGIGSAFWGLIAGGVCYVVL) threads the bilayer. At 383 to 391 (NLIADRNRY) the chain is on the cytoplasmic side.

The protein resides in the cell inner membrane. The protein is Inner membrane protein YdcO (ydcO) of Escherichia coli (strain K12).